Consider the following 173-residue polypeptide: Placenta-specific protein 1 (173 aa).

Positions 1 to 23 (MKLIKFLGGVVFFTLMFSGYSEQ) are cleaved as a signal peptide.

The protein belongs to the PLAC1 family.

Its subcellular location is the secreted. May play a role in placental development. This is Placenta-specific protein 1 from Rattus norvegicus (Rat).